A 363-amino-acid polypeptide reads, in one-letter code: Peroxidase (363 aa).

A signal peptide spans 1–20 (MKLSLLSTFAAVIIGALALP). Gln-21 bears the Pyrrolidone carboxylic acid mark. Disulfide bonds link Cys-31-Cys-43, Cys-42-Cys-312, Cys-62-Cys-148, and Cys-276-Cys-341. The active-site Proton acceptor is His-75. Ca(2+) contacts are provided by Asp-76, Gly-94, Asp-96, and Ser-98. N-linked (GlcNAc...) (high mannose) asparagine glycosylation is present at Asn-162. His-203 serves as a coordination point for heme b. 5 residues coordinate Ca(2+): Ser-204, Asp-221, Thr-223, Val-226, and Asp-228. O-linked (Man...) serine glycosylation occurs at Ser-358.

It belongs to the peroxidase family. Ligninase subfamily. It depends on Ca(2+) as a cofactor. Requires heme b as cofactor.

Its subcellular location is the secreted. It carries out the reaction 2 a phenolic donor + H2O2 = 2 a phenolic radical donor + 2 H2O. This Coprinopsis cinerea (strain Okayama-7 / 130 / ATCC MYA-4618 / FGSC 9003) (Inky cap fungus) protein is Peroxidase (CIP1).